The primary structure comprises 344 residues: MAKPIITLNGLKIVIMLGMLVIILCGIRFAAEIIVPFILALFIAVILNPLVQHMVRWRVPRVLAVSILMTIIVMAMVLLLAYLGSALNELTRTLPQYRNSIMTPLQALEPLLQRVGIDVSVDQLAHYIDPNAAMTLLTNLLTQLSNAMSSIFLLLLTVLFMLLEVPQLPGKFQQMMARPVEGMAAIQRAIDSVSHYLVLKTAISIITGLVAWAMLAALDVRFAFVWGLLAFALNYIPNIGSVLAAIPPIAQVLVFNGFYEALLVLAGYLLINLVFGNILEPRIMGRGLGLSTLVVFLSLIFWGWLLGPVGMLLSVPLTIIVKIALEQTAGGQSIAVLLSDLNKE.

Residues 1-4 are Cytoplasmic-facing; the sequence is MAKP. The chain crosses the membrane as a helical span at residues 5–25; that stretch reads IITLNGLKIVIMLGMLVIILC. At 26 to 30 the chain is on the periplasmic side; sequence GIRFA. Residues 31-51 traverse the membrane as a helical segment; that stretch reads AEIIVPFILALFIAVILNPLV. Residues 52 to 61 are Cytoplasmic-facing; sequence QHMVRWRVPR. The helical transmembrane segment at 62–82 threads the bilayer; that stretch reads VLAVSILMTIIVMAMVLLLAY. Over 83–149 the chain is Periplasmic; the sequence is LGSALNELTR…LLTQLSNAMS (67 aa). The chain crosses the membrane as a helical span at residues 150-170; that stretch reads SIFLLLLTVLFMLLEVPQLPG. At 171 to 196 the chain is on the cytoplasmic side; it reads KFQQMMARPVEGMAAIQRAIDSVSHY. A helical membrane pass occupies residues 197-217; that stretch reads LVLKTAISIITGLVAWAMLAA. The Periplasmic portion of the chain corresponds to 218-221; the sequence is LDVR. Residues 222-242 form a helical membrane-spanning segment; the sequence is FAFVWGLLAFALNYIPNIGSV. Residues 243 to 257 lie on the Cytoplasmic side of the membrane; sequence LAAIPPIAQVLVFNG. A helical transmembrane segment spans residues 258–278; the sequence is FYEALLVLAGYLLINLVFGNI. The Periplasmic segment spans residues 279–292; it reads LEPRIMGRGLGLST. The helical transmembrane segment at 293-313 threads the bilayer; that stretch reads LVVFLSLIFWGWLLGPVGMLL. Topologically, residues 314-344 are cytoplasmic; the sequence is SVPLTIIVKIALEQTAGGQSIAVLLSDLNKE.

This sequence belongs to the autoinducer-2 exporter (AI-2E) (TC 2.A.86) family.

Its subcellular location is the cell inner membrane. It catalyses the reaction (2R,4S)-2-methyltetrahydrofuran-2,3,3,4-tetrol(in) = (2R,4S)-2-methyltetrahydrofuran-2,3,3,4-tetrol(out). In terms of biological role, involved in the transport of the quorum-sensing signal autoinducer 2 (AI-2). Controls the transport of AI-2 either by enhancing its secretion or inhibiting its uptake and consequently represses biofilm formation and motility and affects the global gene expression in biofilms. The chain is AI-2 transport protein TqsA from Escherichia coli (strain K12).